The primary structure comprises 299 residues: Protease HtpX homolog (299 aa).

2 consecutive transmembrane segments (helical) span residues 15–35 (ILLL…GYLF) and 39–59 (GLGG…SMIF). Zn(2+) is bound at residue His-143. Glu-144 is a catalytic residue. Zn(2+) is bound at residue His-147. The next 2 helical transmembrane spans lie at 158 to 178 (IAVA…RMMW) and 198 to 218 (IIML…ATLV). Residue Glu-227 coordinates Zn(2+).

This sequence belongs to the peptidase M48B family. Zn(2+) is required as a cofactor.

The protein localises to the cell membrane. In Streptococcus pneumoniae (strain Hungary19A-6), this protein is Protease HtpX homolog.